Reading from the N-terminus, the 562-residue chain is Bacillolysin (562 aa).

Residues 1 to 24 (MKKKKQALKVLLSVGILSSSFAFA) form the signal peptide. The propeptide at 25 to 245 (HTSSAAPNNV…KQAAKPAAKP (221 aa)) is activation peptide. Residues D303, D305, and D384 each contribute to the Ca(2+) site. H388 is a binding site for Zn(2+). E389 is an active-site residue. Residues H392 and E412 each contribute to the Zn(2+) site. E423, N429, D431, E433, E436, Y439, T440, and D446 together coordinate Ca(2+). The active-site Proton donor is the H477.

This sequence belongs to the peptidase M4 family. The cofactor is Ca(2+). It depends on Zn(2+) as a cofactor.

The protein localises to the secreted. It carries out the reaction Similar, but not identical, to that of thermolysin.. Extracellular zinc metalloprotease. The polypeptide is Bacillolysin (nprM) (Priestia megaterium (strain DSM 319 / IMG 1521) (Bacillus megaterium)).